The following is an 824-amino-acid chain: Fibroblast growth factor receptor 2 (824 aa).

The first 21 residues, methionine 1 to alanine 21, serve as a signal peptide directing secretion. The Extracellular portion of the chain corresponds to arginine 22–glutamate 374. An Ig-like C2-type 1 domain is found at tyrosine 25–threonine 125. Cysteines 62 and 107 form a disulfide. Asparagine 83, asparagine 123, and asparagine 128 each carry an N-linked (GlcNAc...) asparagine glycan. Residues threonine 125–alanine 152 are disordered. Positions glycine 131 to threonine 144 are enriched in acidic residues. Ig-like C2-type domains follow at residues proline 153 to aspartate 246 and proline 254 to threonine 356. The heparin-binding stretch occupies residues lysine 160 to arginine 177. Cysteine 178 and cysteine 230 are joined by a disulfide. N-linked (GlcNAc...) asparagine glycans are attached at residues asparagine 227, asparagine 240, asparagine 264, asparagine 295, asparagine 316, and asparagine 329. The cysteines at positions 277 and 340 are disulfide-linked. Residues isoleucine 375–cysteine 395 form a helical membrane-spanning segment. Residues histidine 396–alanine 824 lie on the Cytoplasmic side of the membrane. Tyrosine 463 carries the phosphotyrosine; by autocatalysis modification. One can recognise a Protein kinase domain in the interval leucine 478–leucine 767. ATP is bound by residues leucine 484–valine 492, lysine 514, glutamate 562–alanine 564, and asparagine 568. Tyrosine 583 is modified (phosphotyrosine; by autocatalysis). The active-site Proton acceptor is the aspartate 623. Tyrosine 653, tyrosine 654, and tyrosine 766 each carry phosphotyrosine; by autocatalysis. A disordered region spans residues serine 801–alanine 824.

It belongs to the protein kinase superfamily. Tyr protein kinase family. Fibroblast growth factor receptor subfamily. In terms of assembly, monomer. Homodimer after ligand binding. In terms of processing, autophosphorylated. Binding of FGF family members together with heparan sulfate proteoglycan or heparin promotes receptor dimerization and autophosphorylation on tyrosine residues. Autophosphorylation occurs in trans between the two FGFR molecules present in the dimer. Post-translationally, N-glycosylated in the endoplasmic reticulum. The N-glycan chains undergo further maturation to an Endo H-resistant form in the Golgi apparatus. Ubiquitinated. FGFR2 is rapidly ubiquitinated after autophosphorylation, leading to internalization and degradation. Subject to degradation both in lysosomes and by the proteasome.

It localises to the cell membrane. The protein localises to the golgi apparatus. Its subcellular location is the cytoplasmic vesicle. The enzyme catalyses L-tyrosyl-[protein] + ATP = O-phospho-L-tyrosyl-[protein] + ADP + H(+). Its activity is regulated as follows. Present in an inactive conformation in the absence of bound ligand. Ligand binding leads to dimerization and activation by autophosphorylation on tyrosine residues. Its function is as follows. Tyrosine-protein kinase that acts as a cell-surface receptor for fibroblast growth factors and plays an essential role in the regulation of cell proliferation, differentiation, migration and apoptosis, and in the regulation of embryonic development. Required for normal embryonic patterning, limb bud development, lung morphogenesis, osteogenesis and skin development. Plays an essential role in the regulation of osteoblast differentiation, proliferation and apoptosis, and is required for normal skeleton development. Promotes cell proliferation in keratinocytes and immature osteoblasts, but promotes apoptosis in differentiated osteoblasts. Phosphorylates PLCG1, FRS2 and PAK4. Ligand binding leads to the activation of several signaling cascades. Activation of PLCG1 leads to the production of the cellular signaling molecules diacylglycerol and inositol 1,4,5-trisphosphate. Phosphorylation of FRS2 triggers recruitment of GRB2, GAB1, PIK3R1 and SOS1, and mediates activation of RAS, MAPK1/ERK2, MAPK3/ERK1 and the MAP kinase signaling pathway, as well as of the AKT1 signaling pathway. FGFR2 signaling is down-regulated by ubiquitination, internalization and degradation. Mutations that lead to constitutive kinase activation or impair normal FGFR2 maturation, internalization and degradation lead to aberrant signaling. Over-expressed FGFR2 promotes activation of STAT1. In Pleurodeles waltl (Iberian ribbed newt), this protein is Fibroblast growth factor receptor 2 (FGFR2).